The following is a 155-amino-acid chain: Ribosomal RNA large subunit methyltransferase H (155 aa).

S-adenosyl-L-methionine-binding positions include Leu-72, Gly-104, and 123-128 (LAKITL).

Belongs to the RNA methyltransferase RlmH family. In terms of assembly, homodimer.

The protein localises to the cytoplasm. It catalyses the reaction pseudouridine(1915) in 23S rRNA + S-adenosyl-L-methionine = N(3)-methylpseudouridine(1915) in 23S rRNA + S-adenosyl-L-homocysteine + H(+). In terms of biological role, specifically methylates the pseudouridine at position 1915 (m3Psi1915) in 23S rRNA. This chain is Ribosomal RNA large subunit methyltransferase H, found in Mycoplasma mycoides subsp. mycoides SC (strain CCUG 32753 / NCTC 10114 / PG1).